A 461-amino-acid polypeptide reads, in one-letter code: Glutamate-gated chloride channel alpha (461 aa).

An N-terminal signal peptide occupies residues 1–20 (MATWIVGKLIIASLILGIQA). The Extracellular segment spans residues 21-275 (QQARTKSQDI…TTIQLKREFS (255 aa)). L-glutamate is bound by residues R98, R117, and S182. A disulfide bridge connects residues C191 and C205. S211 is a binding site for L-glutamate. Residue N246 is glycosylated (N-linked (GlcNAc...) asparagine). A disulfide bridge links C252 with C263. Residues 276–298 (FYLLQLYIPSCMLVIVSWVSFWF) form a helical membrane-spanning segment. Residues 299-303 (DRTAI) lie on the Cytoplasmic side of the membrane. A helical transmembrane segment spans residues 304–325 (PARVTLGVTTLLTMTAQSAGIN). Residues 326–332 (SQLPPVS) are Extracellular-facing. Residues 333–353 (YIKAIDVWIGACMTFIFCALL) form a helical membrane-spanning segment. At 354–432 (EFALVNHIAN…EWNDISKRVD (79 aa)) the chain is on the cytoplasmic side. A helical membrane pass occupies residues 433–454 (LISRALFPVLFFVFNILYWSRF). The Extracellular segment spans residues 455-461 (GQQNVLF).

The protein belongs to the ligand-gated ion channel (TC 1.A.9) family. Glutamate-gated chloride channel (TC 1.A.9.4) subfamily. As to quaternary structure, pentamer. Homooligomer, forms functional heterooligomers with glc-2.

Its subcellular location is the postsynaptic cell membrane. It is found in the cell membrane. Glutamate-gated chloride channel subunit; channel properties depend on the subunit composition. Glutamate binding triggers a rapidly reversible current in heteromeric channels formed by glc-1 and glc-2, while the anti-helmintic drug ivermectin and other avermectins trigger a permanently open channel configuration. Channels containing only glc-1 are activated by ivermectin, but not by glutamate alone (in vitro). The heteromeric channel formed by glc-1 and glc-2 is also activated by ibotenate, and it is blocked by picrotoxin and flufenamic acid. Plays a role in the regulation of locomotor behavior. In Caenorhabditis elegans, this protein is Glutamate-gated chloride channel alpha.